The chain runs to 97 residues: UPF0235 protein APL_1380 (97 aa).

Belongs to the UPF0235 family.

In Actinobacillus pleuropneumoniae serotype 5b (strain L20), this protein is UPF0235 protein APL_1380.